A 219-amino-acid polypeptide reads, in one-letter code: Ribosomal RNA large subunit methyltransferase E (219 aa).

S-adenosyl-L-methionine is bound by residues Gly-60, Trp-62, Asp-80, Asp-96, and Asp-120. The active-site Proton acceptor is the Lys-160.

It belongs to the class I-like SAM-binding methyltransferase superfamily. RNA methyltransferase RlmE family.

The protein localises to the cytoplasm. It catalyses the reaction uridine(2552) in 23S rRNA + S-adenosyl-L-methionine = 2'-O-methyluridine(2552) in 23S rRNA + S-adenosyl-L-homocysteine + H(+). Functionally, specifically methylates the uridine in position 2552 of 23S rRNA at the 2'-O position of the ribose in the fully assembled 50S ribosomal subunit. This is Ribosomal RNA large subunit methyltransferase E from Acidithiobacillus ferrooxidans (strain ATCC 23270 / DSM 14882 / CIP 104768 / NCIMB 8455) (Ferrobacillus ferrooxidans (strain ATCC 23270)).